The following is a 479-amino-acid chain: Aspartyl/glutamyl-tRNA(Asn/Gln) amidotransferase subunit B (479 aa).

This sequence belongs to the GatB/GatE family. GatB subfamily. Heterotrimer of A, B and C subunits.

The catalysed reaction is L-glutamyl-tRNA(Gln) + L-glutamine + ATP + H2O = L-glutaminyl-tRNA(Gln) + L-glutamate + ADP + phosphate + H(+). The enzyme catalyses L-aspartyl-tRNA(Asn) + L-glutamine + ATP + H2O = L-asparaginyl-tRNA(Asn) + L-glutamate + ADP + phosphate + 2 H(+). Functionally, allows the formation of correctly charged Asn-tRNA(Asn) or Gln-tRNA(Gln) through the transamidation of misacylated Asp-tRNA(Asn) or Glu-tRNA(Gln) in organisms which lack either or both of asparaginyl-tRNA or glutaminyl-tRNA synthetases. The reaction takes place in the presence of glutamine and ATP through an activated phospho-Asp-tRNA(Asn) or phospho-Glu-tRNA(Gln). The sequence is that of Aspartyl/glutamyl-tRNA(Asn/Gln) amidotransferase subunit B from Streptococcus pyogenes serotype M4 (strain MGAS10750).